Consider the following 805-residue polypeptide: Sucrose synthase (805 aa).

Residues 275-752 (MVFNVVILSP…GLQRIEEKYT (478 aa)) form a GT-B glycosyltransferase region.

It belongs to the glycosyltransferase 1 family. Plant sucrose synthase subfamily.

It catalyses the reaction an NDP-alpha-D-glucose + D-fructose = a ribonucleoside 5'-diphosphate + sucrose + H(+). Its function is as follows. Sucrose-cleaving enzyme that provides UDP-glucose and fructose for various metabolic pathways. This Medicago sativa (Alfalfa) protein is Sucrose synthase.